Here is a 506-residue protein sequence, read N- to C-terminus: Cobyric acid synthase (506 aa).

Residues 251–448 (DIDIAVVQVP…LHGLFDSDAF (198 aa)) form the GATase cobBQ-type domain. Cys-332 functions as the Nucleophile in the catalytic mechanism. His-440 is a catalytic residue.

Belongs to the CobB/CobQ family. CobQ subfamily.

It functions in the pathway cofactor biosynthesis; adenosylcobalamin biosynthesis. Catalyzes amidations at positions B, D, E, and G on adenosylcobyrinic A,C-diamide. NH(2) groups are provided by glutamine, and one molecule of ATP is hydrogenolyzed for each amidation. This Citrobacter koseri (strain ATCC BAA-895 / CDC 4225-83 / SGSC4696) protein is Cobyric acid synthase.